A 2883-amino-acid polypeptide reads, in one-letter code: Desmoplakin (2883 aa).

The disordered stretch occupies residues 1–21 (MSCNGGSHPRINTLGRMTRAE). The tract at residues 1–596 (MSCNGGSHPR…DYMKTIEDLE (596 aa)) is interaction with PKP1, JUP, PKP2. The globular 1 stretch occupies residues 1–1068 (MSCNGGSHPR…ANSENCNKNK (1068 aa)). Position 22 is a phosphoserine (Ser22). Thr59 is subject to Phosphothreonine. Ser65 carries the phosphoserine modification. Phosphotyrosine is present on Tyr68. A Phosphothreonine modification is found at Thr73. 3 positions are modified to phosphoserine: Ser177, Ser178, and Ser188. Spectrin repeat units follow at residues 190 to 283 (SGWD…HLRQ) and 284 to 387 (LQNI…LKEN). The Spectrin 3a repeat unit spans residues 388 to 458 (AAYFQFFEEA…NLVNKSKKIV (71 aa)). In terms of domain architecture, SH3 spans 470–527 (NKPIILRALCDYKQDQKIVHKGDECILKDNNERSKWYVTGPGGVDMLVPSVGLIIPPP). The stretch at 528–557 (NPLAVDLSCKIEQYYEAILALWNQLYINMK) is one Spectrin 3b repeat. 3 Spectrin repeats span residues 558–639 (SLVS…IQLP), 666–781 (VIET…SLCS), and 782–895 (VRAL…DLEK). Positions 1034-1956 (KSLEDLKLKN…LQKEIEKLRQ (923 aa)) form a coiled coil. Positions 1069–1957 (FLDQNLQKYQ…QKEIEKLRQR (889 aa)) are central fibrous rod domain. Ser1670, Ser1720, and Ser2036 each carry phosphoserine. Residues 1958–2882 (PYGSHRETQT…YSFSSSSIGG (925 aa)) are globular 2. A 4.5 X 38 AA tandem repeats (Domain A) region spans residues 1972–2220 (TVDSSKLVFD…LLLSVQKRSM (249 aa)). Plectin repeat units lie at residues 2021 to 2057 (QPFL…PEST), 2058 to 2095 (VMLL…FDDR), 2096 to 2133 (QQIY…RETG), 2134 to 2171 (MRLL…RDLY), 2175 to 2209 (NDPR…PHTG), 2210 to 2245 (LLLL…PSTV), 2263 to 2300 (KDFL…PGTA), 2301 to 2338 (LELL…IEFK), 2339 to 2376 (EKLL…KGHG), 2377 to 2414 (IRLL…EELS), 2418 to 2452 (SDPS…EETG), 2468 to 2505 (SQKN…YDTF), 2519 to 2556 (TITG…RKFF), 2622 to 2659 (SDPL…SITG), 2660 to 2697 (QRLL…QDMA), 2736 to 2773 (QRFL…GRAA), and 2774 to 2811 (QRLQ…DITG). Residues Ser2219, Ser2221, and Ser2237 each carry the phosphoserine modification. Positions 2256-2458 (DEVGERIKDF…EETGLCLLPL (203 aa)) are 4.5 X 38 AA tandem repeats (Domain B). A lipid anchor (Omega-hydroxyceramide glutamate ester) is attached at Gln2492. The 4.5 X 38 AA tandem repeats (Domain C) stretch occupies residues 2621-2833 (LSDPLEESSP…GLPSPYNMSA (213 aa)). Phosphoserine occurs at positions 2822 and 2827. The disordered stretch occupies residues 2822 to 2883 (SKGLPSPYNM…SFSSSSIGGY (62 aa)). Tyr2829 is subject to Phosphotyrosine. A phosphoserine mark is found at Ser2832 and Ser2836. The segment at 2835–2858 (GSRSGSRSGSRSGSRSGSRSGSRR) is 6 X 4 AA tandem repeats of G-S-R-[SR]. A compositionally biased stretch (low complexity) spans 2835 to 2858 (GSRSGSRSGSRSGSRSGSRSGSRR). An omega-N-methylarginine mark is found at Arg2837 and Arg2858. Ser2860 is modified (phosphoserine). Position 2864 is a phosphothreonine (Thr2864). Residues 2867 to 2883 (SSYSYSYSFSSSSIGGY) show a composition bias toward low complexity. Residue Ser2879 is modified to Phosphoserine.

Belongs to the plakin or cytolinker family. Homodimer. Interacts with COL17A1 (via cytoplasmic region). Interacts with DSC2. Interacts with PKP1. Interacts with PKP2. Interacts weakly with TMEM65. In terms of processing, phosphorylation at Ser-2860 increases association with intermediate filament cytokeratin, potentially facilitating interaction between desmosome junctions and intermediate filament architecture. As to expression, expressed in undifferentiated keratinocytes of the epidermis at birth, expression increases as differentiation proceeds (at protein level). Abundantly expressed in the suprabasal layers and weakly in the basal layers of the outer hair root sheath (at protein level). Expressed at intercalated disks in cardiomyocytes (at protein level).

Its subcellular location is the cell junction. The protein resides in the desmosome. It localises to the cell membrane. The protein localises to the cytoplasm. In terms of biological role, major high molecular weight protein of desmosomes. Regulates profibrotic gene expression in cardiomyocytes via activation of the MAPK14/p38 MAPK signaling cascade and increase in TGFB1 protein abundance. The sequence is that of Desmoplakin from Mus musculus (Mouse).